Here is a 360-residue protein sequence, read N- to C-terminus: MNKILFIFTLFFSSGFFTFAVSADKNPGSENMTNTIGPHDRGGSSPIYNILNSYLTAYNGSHHLYDRMSFLCLSSQNTLNGACPSSDAPGTATIDGETNITLQFTEKRSLIKRELQIKGYKQFLFKNANCPSKLALNSSHFQCNREQASGATLSLYIPAGELNKLPFGGVWNAVLKLNVKRRYDTTYGTYTINITVNLTDKGNIQIWLPQFKSNARVDLNLRPTGGGTYIGRNSVDMCFYDGYSTNSSSLEIRFQDDNSKSDGKFYLKKINDDSKELVYTLSLLLAGKNLTPTNGQALNINTASLETNWNRITAVTMPEISVPVLCWPGRLQLDAKVKNPEAGQYMGNIKITFTPSSQTL.

Its subcellular location is the fimbrium. This Escherichia coli protein is CFA/I fimbrial subunit E (cfaE).